Here is a 214-residue protein sequence, read N- to C-terminus: MTAVRAPRRRASGDVQGGFDFSRPDEIVCGVDEAGRGPLAGPVVAAAVILDPAQPIDGLDDSKVLSAKKRDALYDLIVTRSHAYCVASASVDEIDTLNILHATMLAMKRAVEGLSVLPTLAQIDGNRCPTLSVRAEAIVSGDALVPSISAASILAKVTRDRMLVDLHERFPVYGFNVHAGYGTAKHLAALREHGPCEAHRRSFAPVRAALDLIR.

The RNase H type-2 domain occupies Glu-26–Arg-214. 3 residues coordinate a divalent metal cation: Asp-32, Glu-33, and Asp-124.

This sequence belongs to the RNase HII family. The cofactor is Mn(2+). Mg(2+) is required as a cofactor.

It localises to the cytoplasm. The catalysed reaction is Endonucleolytic cleavage to 5'-phosphomonoester.. Functionally, endonuclease that specifically degrades the RNA of RNA-DNA hybrids. This Burkholderia orbicola (strain MC0-3) protein is Ribonuclease HII.